Here is a 142-residue protein sequence, read N- to C-terminus: Baculoviral IAP repeat-containing protein 5 (142 aa).

Residues 18–88 (RISTFKNWPF…KHSSGCAFLS (71 aa)) form a BIR repeat. Serine 20 is modified (phosphoserine; by AURKC). Lysine 23 bears the N6-acetyllysine mark. Threonine 34 carries the post-translational modification Phosphothreonine; by CDK1 and CDK15. Residue threonine 48 is modified to Phosphothreonine. Zn(2+) contacts are provided by cysteine 57, cysteine 60, histidine 77, and cysteine 84. Residues lysine 90, lysine 110, lysine 112, and lysine 115 each carry the N6-acetyllysine modification. A Phosphothreonine; by AURKB modification is found at threonine 117. The residue at position 129 (lysine 129) is an N6-acetyllysine.

The protein belongs to the IAP family. Monomer or homodimer. Exists as a homodimer in the apo state and as a monomer in the CPC-bound state. The monomer protects cells against apoptosis more efficiently than the dimer. Only the dimeric form is capable of enhancing tubulin stability in cells. When phosphorylated, interacts with LAMTOR5/HBXIP; the resulting complex binds pro-CASP9, as well as active CASP9, but much less efficiently. Component of the chromosomal passenger complex (CPC) composed of at least BIRC5/survivin, CDCA8/borealin, INCENP, AURKB or AURKC; in the complex forms a triple-helix bundle-based subcomplex with INCENP and CDCA8. Interacts with JTB. Interacts (via BIR domain) with histone H3 phosphorylated at 'Thr-3' (H3pT3). Interacts with EVI5. Interacts with GTP-bound RAN in both the S and M phases of the cell cycle. Interacts with USP9X. Interacts with tubulin. Interacts with BIRC2/c-IAP1. The acetylated form at Lys-129 interacts with STAT3. The monomeric form deacetylated at Lys-129 interacts with XPO1/CRM1. The monomeric form interacts with XIAP/BIRC4. Both the dimeric and monomeric form can interact with DIABLO/SMAC. Interacts with BIRC6/bruce. Interacts with FBXL7; this interaction facilitates the polyubiquitination and subsequent proteasomal degradation of BIRC5 by the SCF(FBXL7) E3 ubiquitin-protein ligase complex. Ubiquitinated by the Cul9-RING ubiquitin-protein ligase complex, leading to its degradation. Ubiquitination is required for centrosomal targeting. Deubiquitinated by USP35 or USP38; leading to stabilization. Post-translationally, acetylation at Lys-129 results in its homodimerization, while deacetylation promotes the formation of monomers which heterodimerize with XPO1/CRM1 which facilitates its nuclear export. The acetylated form represses STAT3 transactivation. The dynamic equilibrium between its acetylation and deacetylation at Lys-129 determines its interaction with XPO1/CRM1, its subsequent subcellular localization, and its ability to inhibit STAT3 transactivation. In terms of processing, in vitro phosphorylation at Thr-117 by AURKB prevents interaction with INCENP and localization to mitotic chromosomes. Phosphorylation at Thr-48 by CK2 is critical for its mitotic and anti-apoptotic activities. Phosphorylation at Thr-34 by CDK15 is critical for its anti-apoptotic activity. Phosphorylation at Ser-20 by AURKC is critical for regulation of proper chromosome alignment and segregation, and possibly cytokinesis.

It localises to the cytoplasm. It is found in the nucleus. The protein resides in the chromosome. Its subcellular location is the centromere. The protein localises to the cytoskeleton. It localises to the spindle. It is found in the kinetochore. The protein resides in the midbody. Functionally, multitasking protein that has dual roles in promoting cell proliferation and preventing apoptosis. Component of a chromosome passage protein complex (CPC) which is essential for chromosome alignment and segregation during mitosis and cytokinesis. Acts as an important regulator of the localization of this complex; directs CPC movement to different locations from the inner centromere during prometaphase to midbody during cytokinesis and participates in the organization of the center spindle by associating with polymerized microtubules. Involved in the recruitment of CPC to centromeres during early mitosis via association with histone H3 phosphorylated at 'Thr-3' (H3pT3) during mitosis. The complex with RAN plays a role in mitotic spindle formation by serving as a physical scaffold to help deliver the RAN effector molecule TPX2 to microtubules. May counteract a default induction of apoptosis in G2/M phase. The acetylated form represses STAT3 transactivation of target gene promoters. May play a role in neoplasia. Inhibitor of CASP3 and CASP7. Essential for the maintenance of mitochondrial integrity and function. This chain is Baculoviral IAP repeat-containing protein 5 (BIRC5), found in Sus scrofa (Pig).